The sequence spans 1020 residues: C protein alpha-antigen (1020 aa).

Residues 1–41 (MFRRSKNNSYDTSQTKQRFSIKKFKFGAASVLIGLSFLGGV) form the signal peptide. The 9 X 82 AA tandem repeats stretch occupies residues 227-964 (VPDKDKYDPT…EVTVHVTPKP (738 aa)). Disordered regions lie at residues 261-281 (DGSKGVPTVVGDRPDTNVPGD), 306-330 (PKPVPDKDKYDPTGGETTVPQGTPV), 342-363 (PDGSKGVPTVVGDRPDTNVPGD), 388-445 (PKPV…VPGD), 470-494 (PKPVPDKDKYDPTGGETTVPQGTPV), 506-527 (PDGSKGVPTVVGDRPDTNVPGD), 552-576 (PKPVPDKDKYDPTGGETTVPQGTPV), 588-610 (PDGSKGVPTVVGDRPDTNVPGDH), 634-658 (PKPVPDKDKYDPTGGETTVPQGTPV), 670-692 (PDGSKGVPTVVGDRPDTNVPGDH), 716-740 (PKPVPDKDKYDPTGGETTVPQGTPV), 752-774 (PDGSKGVPTVVGDRPDTNVPGDH), 798-822 (PKPVPDKDKYDPTGGETTVPQGTPV), 834-856 (PDGSKGVPTVVGDRPDTNVPGDH), 880-904 (PKPVPDKDKYDPTGGETTVPQGTPV), and 962-989 (PKPVPDKDKYDPTGKAQQVNGKGNKLPA). A compositionally biased stretch (basic and acidic residues) spans 272 to 281 (DRPDTNVPGD). Positions 320–329 (GETTVPQGTP) are enriched in polar residues. A compositionally biased stretch (basic and acidic residues) spans 354-363 (DRPDTNVPGD). Residues 402-411 (GETTVPQGTP) show a composition bias toward polar residues. The span at 436 to 445 (DRPDTNVPGD) shows a compositional bias: basic and acidic residues. The span at 484–493 (GETTVPQGTP) shows a compositional bias: polar residues. Positions 518 to 527 (DRPDTNVPGD) are enriched in basic and acidic residues. A compositionally biased stretch (polar residues) spans 566–575 (GETTVPQGTP). Positions 600 to 610 (DRPDTNVPGDH) are enriched in basic and acidic residues. Over residues 648-657 (GETTVPQGTP) the composition is skewed to polar residues. Basic and acidic residues predominate over residues 682–692 (DRPDTNVPGDH). Residues 730–739 (GETTVPQGTP) are compositionally biased toward polar residues. Positions 764–774 (DRPDTNVPGDH) are enriched in basic and acidic residues. Residues 812–821 (GETTVPQGTP) are compositionally biased toward polar residues. Over residues 846 to 856 (DRPDTNVPGDH) the composition is skewed to basic and acidic residues. Residues 894 to 903 (GETTVPQGTP) show a composition bias toward polar residues. An LPXTG sorting signal motif is present at residues 987 to 991 (LPATG). T990 carries the pentaglycyl murein peptidoglycan amidated threonine modification. Positions 991–1020 (GENATPFFNVAALTIISSVGLLSVSKKKED) are cleaved as a propeptide — removed by sortase.

The protein resides in the secreted. It is found in the cell wall. In terms of biological role, may play a role in both virulence and immunity. This Streptococcus agalactiae serotype Ia (strain ATCC 27591 / A909 / CDC SS700) protein is C protein alpha-antigen (bca).